Here is a 649-residue protein sequence, read N- to C-terminus: Endoplasmic reticulum membrane protein 65 (649 aa).

The tract at residues 1–55 (MGSNTSPGQADPLESENESSLTSRFLPNKRDGGKDNESVIPEKEEPDLNEPVLAV) is disordered. The Cytoplasmic portion of the chain corresponds to 1 to 165 (MGSNTSPGQA…LATPYAIEKT (165 aa)). A compositionally biased stretch (basic and acidic residues) spans 28–43 (NKRDGGKDNESVIPEK). A Phosphoserine modification is found at S94. The helical transmembrane segment at 166–186 (FLFGWFVSVDSFLYIFTLFPI) threads the bilayer. At 187-302 (RVLISFFTLS…NFWNPAGWMT (116 aa)) the chain is on the lumenal side. A glycan (N-linked (GlcNAc...) asparagine) is linked at N215. A helical membrane pass occupies residues 303–323 (FFYYFAISLAYMVLHTLVLLY). Topologically, residues 324–366 (QIITLNVTVNSYSNAVLALLMSNQLVEIKGAVFKKFEKENLFQ) are cytoplasmic. A helical membrane pass occupies residues 367–387 (LTCSDVVERFQITIMVIIIFL). At 388–414 (RNLAELYTTSSLDQPLLTFKRLKTLLA) the chain is on the lumenal side. The chain crosses the membrane as a helical span at residues 415–435 (PFFWVIGSELFVDWLKHAFII). At 436–479 (KFNYIKPSIYSRFTDVLCHDYVASGAQLTQTVTGCSQQVARRMG) the chain is on the cytoplasmic side. A helical membrane pass occupies residues 480–500 (LPVLPLVCVFIRTSMQTWSMF). Over 501–557 (RSTHSMKQEIAKSIGTIFPTKDNYVYYLPNKEANTYNAGKEASWETLLLSVVRGKSG) the chain is Lumenal. Residues 558–578 (IAFLFFMAIMLKLLLGKAILA) form a helical membrane-spanning segment. Over 579 to 649 (ITQSRYESMQ…RYAMHSKRIW (71 aa)) the chain is Cytoplasmic.

This sequence belongs to the TAPT1 family. Interacts with slp1.

The protein resides in the endoplasmic reticulum membrane. In terms of biological role, may be involved in membrane protein folding. The protein is Endoplasmic reticulum membrane protein 65 of Schizosaccharomyces pombe (strain 972 / ATCC 24843) (Fission yeast).